The primary structure comprises 919 residues: Protein phosphatase 1 regulatory subunit 37 (919 aa).

LRR repeat units lie at residues 340 to 361, 368 to 388, 396 to 417, 425 to 445, 454 to 474, and 482 to 502; these read SLQY…FVAR, SLTV…MLLA, NLRE…AQLG, NIQI…AYVC, GLVT…GYLA, and SLET…HKLK. Disordered stretches follow at residues 626-716 and 790-866; these read ATED…TIPS and APSQ…APLP. Positions 631 to 640 are enriched in acidic residues; it reads THEEEEEEEA. Positions 641 to 658 are enriched in basic and acidic residues; the sequence is SPLKKIEEETTDALKDAT. Positions 677–690 are enriched in acidic residues; that stretch reads PQDDSDSDTEDEET. A compositionally biased stretch (low complexity) spans 691 to 701; the sequence is PTNTSLTSTSP. Polar residues-rich tracts occupy residues 791–801 and 811–837; these read PSQTQNSTQPT and DAQQ…LTES. Positions 833–861 form a coiled coil; the sequence is QLTESVSEEEQKKAETLNNEADINEDANT.

The protein belongs to the PPP1R37 family.

May inhibit phosphatase activity of protein phosphatase 1 (PP1) complexes. This Danio rerio (Zebrafish) protein is Protein phosphatase 1 regulatory subunit 37 (ppp1r37).